We begin with the raw amino-acid sequence, 354 residues long: (R,R)-butanediol dehydrogenase (354 aa).

An Enoyl reductase (ER) domain is found at G10 to V350. Positions 37, 71, and 157 each coordinate Zn(2+).

The protein belongs to the zinc-containing alcohol dehydrogenase family. The cofactor is Zn(2+).

The enzyme catalyses (R,R)-butane-2,3-diol + NAD(+) = (R)-acetoin + NADH + H(+). It carries out the reaction (S)-acetoin + NAD(+) = diacetyl + NADH + H(+). In terms of biological role, NAD-dependent butanediol dehydrogenase which catalyzes the oxidation of (R,R)-butane-2,3-diol to (3R)-acetoin and of meso-butane-2,3-diol to (3S)-acetoin. Preferentially oxidizes (R,R)-butane-2,3-diol, with a catalytic efficiency approximately fourfold higher than with meso-butane-2,3-diol. Shows a very low activity with (S,S)-butane-2,3-diol. Can also catalyze the reduction of (3R/3S)-acetoin and diacetyl in the presence of NADH. The protein is (R,R)-butanediol dehydrogenase of Neisseria gonorrhoeae (strain ATCC 700825 / FA 1090).